Consider the following 101-residue polypeptide: Small ribosomal subunit protein uS14 (101 aa).

The protein belongs to the universal ribosomal protein uS14 family. Part of the 30S ribosomal subunit. Contacts proteins S3 and S10.

Binds 16S rRNA, required for the assembly of 30S particles and may also be responsible for determining the conformation of the 16S rRNA at the A site. The sequence is that of Small ribosomal subunit protein uS14 from Enterobacter sp. (strain 638).